A 583-amino-acid chain; its full sequence is Aspartate--tRNA ligase (583 aa).

Glu-174 is a binding site for L-aspartate. Residues 198–201 are aspartate; that stretch reads QTFK. Residue Arg-220 coordinates L-aspartate. Residues 220-222 and Gln-229 each bind ATP; that span reads RDE. His-445 provides a ligand contact to L-aspartate. Glu-479 contributes to the ATP binding site. Arg-486 provides a ligand contact to L-aspartate. 531–534 is an ATP binding site; sequence GLDR.

The protein belongs to the class-II aminoacyl-tRNA synthetase family. Type 1 subfamily. As to quaternary structure, homodimer.

It localises to the cytoplasm. The enzyme catalyses tRNA(Asp) + L-aspartate + ATP = L-aspartyl-tRNA(Asp) + AMP + diphosphate. Catalyzes the attachment of L-aspartate to tRNA(Asp) in a two-step reaction: L-aspartate is first activated by ATP to form Asp-AMP and then transferred to the acceptor end of tRNA(Asp). The chain is Aspartate--tRNA ligase from Flavobacterium psychrophilum (strain ATCC 49511 / DSM 21280 / CIP 103535 / JIP02/86).